A 348-amino-acid polypeptide reads, in one-letter code: Dihydroorotase (348 aa).

Residues H14 and H16 each coordinate Zn(2+). Residues 16–18 and N42 each bind substrate; that span reads HLR. Zn(2+)-binding residues include K100, H137, and H175. K100 is subject to N6-carboxylysine. H137 lines the substrate pocket. L220 contributes to the substrate binding site. D248 contacts Zn(2+). Residue D248 is part of the active site. Residues H252 and A264 each coordinate substrate.

This sequence belongs to the metallo-dependent hydrolases superfamily. DHOase family. Class II DHOase subfamily. In terms of assembly, homodimer. Zn(2+) serves as cofactor.

It catalyses the reaction (S)-dihydroorotate + H2O = N-carbamoyl-L-aspartate + H(+). It functions in the pathway pyrimidine metabolism; UMP biosynthesis via de novo pathway; (S)-dihydroorotate from bicarbonate: step 3/3. In terms of biological role, catalyzes the reversible cyclization of carbamoyl aspartate to dihydroorotate. The chain is Dihydroorotase from Pseudomonas paraeruginosa (strain DSM 24068 / PA7) (Pseudomonas aeruginosa (strain PA7)).